Reading from the N-terminus, the 363-residue chain is Ribosome-binding ATPase YchF (363 aa).

An OBG-type G domain is found at Phe-3–Met-256. ATP is bound at residue Asn-12–Thr-17. Mg(2+) contacts are provided by Ser-16 and Thr-36. Residues Asn-278–Phe-361 enclose the TGS domain.

This sequence belongs to the TRAFAC class OBG-HflX-like GTPase superfamily. OBG GTPase family. YchF/OLA1 subfamily. Requires Mg(2+) as cofactor.

ATPase that binds to both the 70S ribosome and the 50S ribosomal subunit in a nucleotide-independent manner. This Escherichia coli O157:H7 protein is Ribosome-binding ATPase YchF.